The following is a 181-amino-acid chain: MPRVHVFARDHINTDEIIPARHLTTDIEAELAPYAMEDYDRDFAKRVQPGDIIVAGADFGCGSSREHAVWALRGAGVGAVIAPNFARIYYRNSINNGFLALECDGIVEAFQDGDEANLDLKGGTITNLRTGQTLTFVPVPQFALDVQKAGGWLEYMRAQVPAEADDSSSAQPHPGKENAHA.

This sequence belongs to the LeuD family. LeuD type 2 subfamily. Heterodimer of LeuC and LeuD.

The enzyme catalyses (2R,3S)-3-isopropylmalate = (2S)-2-isopropylmalate. It functions in the pathway amino-acid biosynthesis; L-leucine biosynthesis; L-leucine from 3-methyl-2-oxobutanoate: step 2/4. Functionally, catalyzes the isomerization between 2-isopropylmalate and 3-isopropylmalate, via the formation of 2-isopropylmaleate. The sequence is that of 3-isopropylmalate dehydratase small subunit from Deinococcus deserti (strain DSM 17065 / CIP 109153 / LMG 22923 / VCD115).